Consider the following 146-residue polypeptide: Aminoglycoside N(6')-acetyltransferase type 1 (146 aa).

The N-acetyltransferase domain maps to 1-146 (MNIMPVSESL…RVVYFKKHIG (146 aa)). Substrate-binding residues include Trp22, His25, Tyr66, and Glu79. 81-83 (IYV) contributes to the acetyl-CoA binding site. Asp115 serves as a coordination point for substrate. Asn120 contacts acetyl-CoA. Position 136 (Glu136) interacts with substrate.

As to quaternary structure, homodimer.

It catalyses the reaction kanamycin B + acetyl-CoA = N(6')-acetylkanamycin B + CoA + H(+). In terms of biological role, catalyzes the transfer of an acetyl group from acetyl-CoA to the 6'-amino group of aminoglycoside molecules conferring resistance to antibiotics containing the purpurosamine ring including amikacin, kanamycin, tobramycin and netilmicin. This Acinetobacter genomosp. 13 protein is Aminoglycoside N(6')-acetyltransferase type 1.